Reading from the N-terminus, the 333-residue chain is Neuropeptides B/W receptor type 2 (333 aa).

Over 1 to 45 the chain is Extracellular; the sequence is MQAAGHPEPLDSRGSFSLPTMGANVSQDNGTGHNATFSEPLPFLY. Residues asparagine 24, asparagine 29, and asparagine 34 are each glycosylated (N-linked (GlcNAc...) asparagine). Residues 46–69 traverse the membrane as a helical segment; it reads VLLPAVYSGICAVGLTGNTAVILV. Residues 70 to 80 lie on the Cytoplasmic side of the membrane; the sequence is ILRAPKMKTVT. A helical transmembrane segment spans residues 81–105; it reads NVFILNLAVADGLFTLVLPVNIAEH. At 106-120 the chain is on the extracellular side; sequence LLQYWPFGELLCKLV. A disulfide bridge connects residues cysteine 117 and cysteine 197. A helical transmembrane segment spans residues 121 to 140; sequence LAVDHYNIFSSIYFLAVMSV. Over 141 to 165 the chain is Cytoplasmic; sequence DRYLVVLATVRSRHMPWRTYRGAKV. A helical membrane pass occupies residues 166-185; the sequence is ASLCVWLGVTVLVLPFFSFA. Residues 186 to 211 lie on the Extracellular side of the membrane; it reads GVYSNELQVPSCGLSFPWPEQVWFKA. A helical transmembrane segment spans residues 212-233; sequence SRVYTLVLGFVLPVCTICVLYT. Topologically, residues 234–257 are cytoplasmic; sequence DLLRRLRAVRLRSGAKALGKARRK. Residues 258-282 traverse the membrane as a helical segment; it reads VTVLVLVVLAVCLLCWTPFHLASVV. Topologically, residues 283-292 are extracellular; it reads ALTTDLPQTP. Residues 293 to 307 form a helical membrane-spanning segment; sequence LVISMSYVITSLSYA. Residues 308 to 333 lie on the Cytoplasmic side of the membrane; that stretch reads NSCLNPFLYAFLDDNFRKNFRSILRC.

It belongs to the G-protein coupled receptor 1 family. Detected at high levels in caudate nucleus, hippocampus and amygdala; at moderate levels in the adult brain, thalamus, parietal cortex, pituitary gland, adrenal gland and lymph nodes.

The protein localises to the cell membrane. Its function is as follows. Interacts specifically with a number of opioid ligands. Receptor for neuropeptides B and W, which may be involved in neuroendocrine system regulation, food intake and the organization of other signals. This Homo sapiens (Human) protein is Neuropeptides B/W receptor type 2 (NPBWR2).